We begin with the raw amino-acid sequence, 155 residues long: UPF0260 protein NGR_c07710 (155 aa).

The protein belongs to the UPF0260 family.

This Sinorhizobium fredii (strain NBRC 101917 / NGR234) protein is UPF0260 protein NGR_c07710.